The following is a 713-amino-acid chain: Cyclomaltodextrin glucanotransferase (713 aa).

A signal peptide spans M1–A27. An A1 region spans residues A28 to P165. Ca(2+)-binding residues include D54, N56, N59, and N60. An intrachain disulfide couples C70 to C77. G78 and D80 together coordinate Ca(2+). Y127–W128 contacts substrate. A Ca(2+)-binding site is contributed by N166. The tract at residues N166–H229 is b. Residues H167 and S172 to D174 contribute to the substrate site. Residue I217 participates in Ca(2+) binding. Residue N220–D223 participates in substrate binding. D226 is a binding site for Ca(2+). Positions N230 to Y433 are A2. Position 254 (R254) interacts with substrate. The Nucleophile role is filled by D256. Residue K259–H260 coordinates substrate. H260 lines the Ca(2+) pocket. E284 serves as the catalytic Proton donor. A342 serves as a coordination point for Ca(2+). Residues H354, D398, and R402 each coordinate substrate. A c region spans residues G434–A522. A d region spans residues T523 to L609. One can recognise an IPT/TIG domain in the interval P526 to E607. A Ca(2+)-binding site is contributed by D604. The 106-residue stretch at V608–P713 folds into the CBM20 domain. The tract at residues S610–P713 is e.

Belongs to the glycosyl hydrolase 13 family. In terms of assembly, monomer. It depends on Ca(2+) as a cofactor.

The protein localises to the secreted. It catalyses the reaction Cyclizes part of a (1-&gt;4)-alpha-D-glucan chain by formation of a (1-&gt;4)-alpha-D-glucosidic bond.. This chain is Cyclomaltodextrin glucanotransferase (cgt), found in Niallia circulans (Bacillus circulans).